Here is a 170-residue protein sequence, read N- to C-terminus: ATP synthase subunit b (170 aa).

Residues 11–31 (AFTFGDAFFTLFAFAILLVLI) traverse the membrane as a helical segment.

It belongs to the ATPase B chain family. F-type ATPases have 2 components, F(1) - the catalytic core - and F(0) - the membrane proton channel. F(1) has five subunits: alpha(3), beta(3), gamma(1), delta(1), epsilon(1). F(0) has three main subunits: a(1), b(2) and c(10-14). The alpha and beta chains form an alternating ring which encloses part of the gamma chain. F(1) is attached to F(0) by a central stalk formed by the gamma and epsilon chains, while a peripheral stalk is formed by the delta and b chains.

The protein resides in the cell membrane. Its function is as follows. F(1)F(0) ATP synthase produces ATP from ADP in the presence of a proton or sodium gradient. F-type ATPases consist of two structural domains, F(1) containing the extramembraneous catalytic core and F(0) containing the membrane proton channel, linked together by a central stalk and a peripheral stalk. During catalysis, ATP synthesis in the catalytic domain of F(1) is coupled via a rotary mechanism of the central stalk subunits to proton translocation. In terms of biological role, component of the F(0) channel, it forms part of the peripheral stalk, linking F(1) to F(0). The chain is ATP synthase subunit b from Listeria welshimeri serovar 6b (strain ATCC 35897 / DSM 20650 / CCUG 15529 / CIP 8149 / NCTC 11857 / SLCC 5334 / V8).